The following is a 314-amino-acid chain: Ribose-phosphate pyrophosphokinase (314 aa).

Residues 37 to 39 (DGE) and 96 to 97 (RQ) contribute to the ATP site. Histidine 131 and aspartate 170 together coordinate Mg(2+). Lysine 194 is an active-site residue. Residues arginine 196, aspartate 220, and 224–228 (DTGGT) contribute to the D-ribose 5-phosphate site.

Belongs to the ribose-phosphate pyrophosphokinase family. Class I subfamily. Homohexamer. Mg(2+) is required as a cofactor.

Its subcellular location is the cytoplasm. It carries out the reaction D-ribose 5-phosphate + ATP = 5-phospho-alpha-D-ribose 1-diphosphate + AMP + H(+). Its pathway is metabolic intermediate biosynthesis; 5-phospho-alpha-D-ribose 1-diphosphate biosynthesis; 5-phospho-alpha-D-ribose 1-diphosphate from D-ribose 5-phosphate (route I): step 1/1. In terms of biological role, involved in the biosynthesis of the central metabolite phospho-alpha-D-ribosyl-1-pyrophosphate (PRPP) via the transfer of pyrophosphoryl group from ATP to 1-hydroxyl of ribose-5-phosphate (Rib-5-P). This Vibrio vulnificus (strain CMCP6) protein is Ribose-phosphate pyrophosphokinase.